We begin with the raw amino-acid sequence, 416 residues long: NADH-quinone oxidoreductase subunit D (416 aa).

The protein belongs to the complex I 49 kDa subunit family. In terms of assembly, NDH-1 is composed of 14 different subunits. Subunits NuoB, C, D, E, F, and G constitute the peripheral sector of the complex.

The protein resides in the cell inner membrane. It carries out the reaction a quinone + NADH + 5 H(+)(in) = a quinol + NAD(+) + 4 H(+)(out). In terms of biological role, NDH-1 shuttles electrons from NADH, via FMN and iron-sulfur (Fe-S) centers, to quinones in the respiratory chain. The immediate electron acceptor for the enzyme in this species is believed to be ubiquinone. Couples the redox reaction to proton translocation (for every two electrons transferred, four hydrogen ions are translocated across the cytoplasmic membrane), and thus conserves the redox energy in a proton gradient. The protein is NADH-quinone oxidoreductase subunit D of Rhodopseudomonas palustris (strain BisB5).